Consider the following 380-residue polypeptide: Cytochrome b (380 aa).

A run of 4 helical transmembrane segments spans residues 34–54 (FGSL…LLAM), 78–99 (WLIR…YLHI), 114–134 (WNTG…GYVL), and 179–199 (FFAL…IHLT). His84 and His98 together coordinate heme b. Heme b is bound by residues His183 and His197. An a ubiquinone-binding site is contributed by His202. 4 consecutive transmembrane segments (helical) span residues 227 to 247 (LKDI…ALFS), 289 to 309 (LGGV…PFLH), 321 to 341 (LSQL…WVGS), and 348 to 368 (FIII…ILFP).

The protein belongs to the cytochrome b family. As to quaternary structure, the cytochrome bc1 complex contains 11 subunits: 3 respiratory subunits (MT-CYB, CYC1 and UQCRFS1), 2 core proteins (UQCRC1 and UQCRC2) and 6 low-molecular weight proteins (UQCRH/QCR6, UQCRB/QCR7, UQCRQ/QCR8, UQCR10/QCR9, UQCR11/QCR10 and a cleavage product of UQCRFS1). This cytochrome bc1 complex then forms a dimer. Heme b serves as cofactor.

It localises to the mitochondrion inner membrane. Component of the ubiquinol-cytochrome c reductase complex (complex III or cytochrome b-c1 complex) that is part of the mitochondrial respiratory chain. The b-c1 complex mediates electron transfer from ubiquinol to cytochrome c. Contributes to the generation of a proton gradient across the mitochondrial membrane that is then used for ATP synthesis. This is Cytochrome b (MT-CYB) from Pterodroma hypoleuca (Bonin petrel).